The primary structure comprises 130 residues: Protein NrdI (130 aa).

Belongs to the NrdI family.

In terms of biological role, probably involved in ribonucleotide reductase function. This chain is Protein NrdI, found in Bacillus velezensis (strain DSM 23117 / BGSC 10A6 / LMG 26770 / FZB42) (Bacillus amyloliquefaciens subsp. plantarum).